The primary structure comprises 216 residues: Uracil phosphoribosyltransferase (216 aa).

5-phospho-alpha-D-ribose 1-diphosphate is bound by residues Arg85, Arg110, and 135-143 (DPMVATGYS). Uracil is bound by residues Ile200 and 205–207 (GDA). Asp206 is a binding site for 5-phospho-alpha-D-ribose 1-diphosphate.

This sequence belongs to the UPRTase family. Mg(2+) is required as a cofactor.

The catalysed reaction is UMP + diphosphate = 5-phospho-alpha-D-ribose 1-diphosphate + uracil. It participates in pyrimidine metabolism; UMP biosynthesis via salvage pathway; UMP from uracil: step 1/1. Allosterically activated by GTP. In terms of biological role, catalyzes the conversion of uracil and 5-phospho-alpha-D-ribose 1-diphosphate (PRPP) to UMP and diphosphate. In Burkholderia thailandensis (strain ATCC 700388 / DSM 13276 / CCUG 48851 / CIP 106301 / E264), this protein is Uracil phosphoribosyltransferase.